Consider the following 158-residue polypeptide: MTIFEGSFTNASTLKVGIVVARFNDLITNKILSGCLDCLKRHGLDTSETSKELDIVWVPGSFELPIAAKTLLKKTNYDVVIALGAVIRGETSHYDVVISEASKGISQVSYENNVPIIFGVLTTDSMQQALERAGIKNNLGWNYALQAIEMGSLIKNLN.

5-amino-6-(D-ribitylamino)uracil-binding positions include Phe23, 61–63 (SFE), and 85–87 (AVI). Residue 90-91 (ET) participates in (2S)-2-hydroxy-3-oxobutyl phosphate binding. The active-site Proton donor is His93. 5-amino-6-(D-ribitylamino)uracil is bound at residue Phe118. Arg132 serves as a coordination point for (2S)-2-hydroxy-3-oxobutyl phosphate.

This sequence belongs to the DMRL synthase family.

It catalyses the reaction (2S)-2-hydroxy-3-oxobutyl phosphate + 5-amino-6-(D-ribitylamino)uracil = 6,7-dimethyl-8-(1-D-ribityl)lumazine + phosphate + 2 H2O + H(+). It participates in cofactor biosynthesis; riboflavin biosynthesis; riboflavin from 2-hydroxy-3-oxobutyl phosphate and 5-amino-6-(D-ribitylamino)uracil: step 1/2. Its function is as follows. Catalyzes the formation of 6,7-dimethyl-8-ribityllumazine by condensation of 5-amino-6-(D-ribitylamino)uracil with 3,4-dihydroxy-2-butanone 4-phosphate. This is the penultimate step in the biosynthesis of riboflavin. The sequence is that of 6,7-dimethyl-8-ribityllumazine synthase from Prochlorococcus marinus subsp. pastoris (strain CCMP1986 / NIES-2087 / MED4).